Reading from the N-terminus, the 214-residue chain is Uracil phosphoribosyltransferase (214 aa).

5-phospho-alpha-D-ribose 1-diphosphate is bound by residues Arg81, Arg106, and 133–141; that span reads DPMLATGNS. Uracil-binding positions include Ile196 and 201–203; that span reads GDA. Asp202 serves as a coordination point for 5-phospho-alpha-D-ribose 1-diphosphate.

The protein belongs to the UPRTase family. It depends on Mg(2+) as a cofactor.

The catalysed reaction is UMP + diphosphate = 5-phospho-alpha-D-ribose 1-diphosphate + uracil. It participates in pyrimidine metabolism; UMP biosynthesis via salvage pathway; UMP from uracil: step 1/1. Its activity is regulated as follows. Allosterically activated by GTP. In terms of biological role, catalyzes the conversion of uracil and 5-phospho-alpha-D-ribose 1-diphosphate (PRPP) to UMP and diphosphate. This is Uracil phosphoribosyltransferase from Legionella pneumophila subsp. pneumophila (strain Philadelphia 1 / ATCC 33152 / DSM 7513).